The following is a 189-amino-acid chain: MALPFVLLMALVVLNCKSICSLGCDLPQTHSLSNRRTLMIMAQMGRISPFSCLKDRHDFGFPQEEFDGNQFQKAQAISVLHEMIQQTFNLFSTKDSSATWDETLLDKFYTELYQQLNDLEACMMQEVGVEDTPLMNVDSILTVRKYFQRITLYLTEKKYSPCAWEVVRAEIMRSFSLSANLQERLRRKE.

The first 21 residues, 1 to 21 (MALPFVLLMALVVLNCKSICS), serve as a signal peptide directing secretion. 2 disulfide bridges follow: C24–C122 and C52–C162.

This sequence belongs to the alpha/beta interferon family.

Its subcellular location is the secreted. Functionally, produced by macrophages, IFN-alpha have antiviral activities. Interferon stimulates the production of two enzymes: a protein kinase and an oligoadenylate synthetase. This is Interferon alpha-5 (IFNA5) from Homo sapiens (Human).